A 274-amino-acid chain; its full sequence is Nitrogenase iron protein (274 aa).

Position 8 to 15 (8 to 15 (GKGGIGKS)) interacts with ATP. Position 94 (cysteine 94) interacts with [4Fe-4S] cluster. At arginine 97 the chain carries ADP-ribosylarginine; by dinitrogenase reductase ADP-ribosyltransferase. Cysteine 131 serves as a coordination point for [4Fe-4S] cluster.

The protein belongs to the NifH/BchL/ChlL family. In terms of assembly, homodimer. [4Fe-4S] cluster serves as cofactor. In terms of processing, the reversible ADP-ribosylation of Arg-97 inactivates the nitrogenase reductase and regulates nitrogenase activity.

It catalyses the reaction N2 + 8 reduced [2Fe-2S]-[ferredoxin] + 16 ATP + 16 H2O = H2 + 8 oxidized [2Fe-2S]-[ferredoxin] + 2 NH4(+) + 16 ADP + 16 phosphate + 6 H(+). In terms of biological role, the key enzymatic reactions in nitrogen fixation are catalyzed by the nitrogenase complex, which has 2 components: the iron protein and the molybdenum-iron protein. This is Nitrogenase iron protein from Pelodictyon phaeoclathratiforme (strain DSM 5477 / BU-1).